A 387-amino-acid polypeptide reads, in one-letter code: 3-ketoacyl-CoA thiolase (387 aa).

C91 serves as the catalytic Acyl-thioester intermediate. Residues H343 and C373 each act as proton acceptor in the active site.

This sequence belongs to the thiolase-like superfamily. Thiolase family. In terms of assembly, heterotetramer of two alpha chains (FadB) and two beta chains (FadA).

Its subcellular location is the cytoplasm. It carries out the reaction an acyl-CoA + acetyl-CoA = a 3-oxoacyl-CoA + CoA. Its pathway is lipid metabolism; fatty acid beta-oxidation. Catalyzes the final step of fatty acid oxidation in which acetyl-CoA is released and the CoA ester of a fatty acid two carbons shorter is formed. This chain is 3-ketoacyl-CoA thiolase, found in Shigella dysenteriae serotype 1 (strain Sd197).